We begin with the raw amino-acid sequence, 532 residues long: 2,3-bisphosphoglycerate-independent phosphoglycerate mutase (532 aa).

Residues D15 and S65 each contribute to the Mn(2+) site. The active-site Phosphoserine intermediate is the S65. Substrate contacts are provided by residues H126, 156 to 157, R188, R194, 258 to 261, and K331; these read RD and RPDR. Mn(2+) is bound by residues D398, H402, D439, H440, and H457.

This sequence belongs to the BPG-independent phosphoglycerate mutase family. In terms of assembly, monomer. Requires Mn(2+) as cofactor.

It carries out the reaction (2R)-2-phosphoglycerate = (2R)-3-phosphoglycerate. It participates in carbohydrate degradation; glycolysis; pyruvate from D-glyceraldehyde 3-phosphate: step 3/5. Catalyzes the interconversion of 2-phosphoglycerate and 3-phosphoglycerate. In Microcystis aeruginosa (strain NIES-843 / IAM M-2473), this protein is 2,3-bisphosphoglycerate-independent phosphoglycerate mutase.